Here is a 381-residue protein sequence, read N- to C-terminus: Prolargin (381 aa).

The first 21 residues, 1-21 (MRSSLCWLLTLLLILATAAQG), serve as a signal peptide directing secretion. The disordered stretch occupies residues 19 to 65 (AQGQPTRRPRPRPRPRPRPRLRPTPSFPQPDEPTEPTDLPPPLPPGP). Over residues 25–39 (RRPRPRPRPRPRPRL) the composition is skewed to basic residues. Over residues 56–65 (DLPPPLPPGP) the composition is skewed to pro residues. LRR repeat units follow at residues 94–113 (RKVP…NNFI), 114–137 (TELP…NNRI), 138–161 (RKVD…KNQL), 162–182 (EEVP…QNQI), 183–206 (SRIP…HNKL), 207–232 (SDGV…HNTL), 233–253 (RKMP…SNRI), 254–277 (EAIP…YNQL), 278–302 (SDRG…HNRI), 303–322 (SSVP…NNSI), 323–361 (EKIN…GNYL), and 362–381 (KPPI…SVVI). N123 carries an N-linked (GlcNAc...) asparagine glycan. Residues N288, N319, and N326 are each glycosylated (N-linked (GlcNAc...) asparagine). C331 and C372 are oxidised to a cystine.

Belongs to the small leucine-rich proteoglycan (SLRP) family. SLRP class II subfamily. Binds the basement membrane heparan sulfate proteoglycan perlecan and triple helical collagens type I and type II. Post-translationally, glycosylated; contains heparan sulfate.

Its subcellular location is the secreted. The protein resides in the extracellular space. The protein localises to the extracellular matrix. In terms of biological role, may anchor basement membranes to the underlying connective tissue. This is Prolargin (PRELP) from Bos taurus (Bovine).